Reading from the N-terminus, the 278-residue chain is MKPIYGLIGNPVAHSMSPDIHNAALKDLSLEGHYHAFRVENEDLEDAVKGMRALGIQGFNVTVPHKVSIMKHLDRIDESAEALGAVNTVRREKEGLVGYNTDGAGFLKSLKPSLDRPLSELSILLIGAGGAARAIFTTLAAETPKRLDVANRTPEKALAFTQRFDGEARALSLQEAEADLSAYDIVIQTTSVGMHPNVEAAPLSLANAKETCLVCDIIYNPLKTALLHEAEAKGLKTLDGVGMFIGQAALAFELWTGHEPNMEKMKSIVLQQLGGKSC.

Residues 15-17 (SMS) and Thr62 each bind shikimate. Lys66 functions as the Proton acceptor in the catalytic mechanism. NADP(+) is bound at residue Glu78. Residues Asn87 and Asp102 each coordinate shikimate. Residues 127-131 (GAGGA), 151-156 (NRTPEK), and Ile217 contribute to the NADP(+) site. Shikimate is bound at residue Tyr219. Gly240 lines the NADP(+) pocket.

The protein belongs to the shikimate dehydrogenase family. In terms of assembly, homodimer.

The catalysed reaction is shikimate + NADP(+) = 3-dehydroshikimate + NADPH + H(+). Its pathway is metabolic intermediate biosynthesis; chorismate biosynthesis; chorismate from D-erythrose 4-phosphate and phosphoenolpyruvate: step 4/7. Involved in the biosynthesis of the chorismate, which leads to the biosynthesis of aromatic amino acids. Catalyzes the reversible NADPH linked reduction of 3-dehydroshikimate (DHSA) to yield shikimate (SA). In Bacillus licheniformis (strain ATCC 14580 / DSM 13 / JCM 2505 / CCUG 7422 / NBRC 12200 / NCIMB 9375 / NCTC 10341 / NRRL NRS-1264 / Gibson 46), this protein is Shikimate dehydrogenase (NADP(+)).